The primary structure comprises 346 residues: MTTNTVTLQTAHIVSLGDIEEAKASIKPFIRRTPLIKSMYLSQSITKGNVFLKLENMQFTGSFKFRGASNKINHLTDEQKEKGIIAASAGNHAQGVALTAKLLGIDATIVMPETAPQAKQQATKGYGTKVILKGKNFNETRLYMEELAKENGMTIVHPYDDKFVMAGQGTIGLEILDDIWNVNTVIVPVGGGGLIAGIATALKSFNPSIHIIGVQSENVHGMAESFYKRDLTEHRVDSTIADGCDVKVPGEQTYEVVKHLVDEFILVIEEEIEHAMKDLMQRAKIITEGAGALPTAAILSGKINNKWLEDKNVVALVSGGNVDLTRVSGVIEHGLNIADTSKGVVG.

AMP is bound at residue 59–60; sequence FT. Lys64 carries the post-translational modification N6-(pyridoxal phosphate)lysine. Residues Gln94, 125-126, and Asn321 each bind AMP; that span reads GY.

Belongs to the serine/threonine dehydratase family. In the native structure, TdcB is in a dimeric form, whereas in the TdcB-AMP complex, it exists in a tetrameric form (dimer of dimers). It depends on pyridoxal 5'-phosphate as a cofactor.

It catalyses the reaction L-threonine = 2-oxobutanoate + NH4(+). The protein operates within amino-acid degradation; L-threonine degradation via propanoate pathway; propanoate from L-threonine: step 1/4. Each protein molecule can bind up to four molecules of AMP, which act as an allosteric activator to the enzyme. Catalyzes the anaerobic formation of alpha-ketobutyrate and ammonia from threonine in a two-step reaction. The first step involved a dehydration of threonine and a production of enamine intermediates (aminocrotonate), which tautomerizes to its imine form (iminobutyrate). Both intermediates are unstable and short-lived. The second step is the nonenzymatic hydrolysis of the enamine/imine intermediates to form 2-ketobutyrate and free ammonia. In the low water environment of the cell, the second step is accelerated by RidA. This Staphylococcus aureus (strain bovine RF122 / ET3-1) protein is L-threonine dehydratase catabolic TdcB (tdcB).